Reading from the N-terminus, the 508-residue chain is Enhancer of mRNA-decapping protein 3 (508 aa).

The Sm domain maps to 1–68 (MAADWLGSIV…ITELKILEIP (68 aa)). The required for P-body targeting and interaction with DCP1A stretch occupies residues 1–79 (MAADWLGSIV…PGGNQHFGDV (79 aa)). The disordered stretch occupies residues 95–192 (ISQNGTGKLV…QMKNKDDECF (98 aa)). Residues Ser-131, Ser-138, Ser-140, and Ser-161 each carry the phosphoserine modification. The required for interaction with DDX6 stretch occupies residues 191–296 (CFGDDIEEIP…HKKLLSVAEK (106 aa)). In terms of domain architecture, DFDF spans 192–228 (FGDDIEEIPDTDFDFEGNLALFDKAAVFEEIGTYERR). Residues 283 to 487 (SYEQHKKLLS…DIGIPQQVFQ (205 aa)) enclose the YjeF N-terminal domain.

Belongs to the EDC3 family. In terms of assembly, homodimer (via YjeF N-terminal domain). Forms a complex with DCP1A, DCP2, DDX6 and EDC4/HEDLS, within this complex directly interacts with DCP1A and DDX6. Interacts with ZFP36.

Its subcellular location is the cytoplasm. The protein localises to the P-body. Binds single-stranded RNA. Involved in the process of mRNA degradation and in the positive regulation of mRNA decapping. This chain is Enhancer of mRNA-decapping protein 3 (EDC3), found in Macaca fascicularis (Crab-eating macaque).